Here is a 130-residue protein sequence, read N- to C-terminus: Large-conductance mechanosensitive channel (130 aa).

The Cytoplasmic segment spans residues Met-1 to Ile-14. A helical transmembrane segment spans residues Val-15 to Val-43. Residues Gly-44–Lys-65 are Extracellular-facing. A helical transmembrane segment spans residues Tyr-66–Ile-85. At Val-86–Glu-130 the chain is on the cytoplasmic side.

The protein belongs to the MscL family. As to quaternary structure, homopentamer.

It is found in the cell membrane. Functionally, channel that opens in response to stretch forces in the membrane lipid bilayer. Forms a nonselective ion channel with a conductance of about 4 nanosiemens. May participate in the regulation of osmotic pressure changes within the cell. The chain is Large-conductance mechanosensitive channel from Bacillus subtilis (strain 168).